Here is an 85-residue protein sequence, read N- to C-terminus: Putative transmembrane protein ORF28 (85 aa).

2 consecutive transmembrane segments (helical) span residues 32–52 (IMLLWWIGILGMLNYNLVQIV) and 59–79 (LLSVSTFIVGCGLCIGFMLGI).

It localises to the host membrane. The sequence is that of Putative transmembrane protein ORF28 from Haloarcula hispanica (His1V).